A 119-amino-acid polypeptide reads, in one-letter code: MLHQMMKAKLHRATISAADLNYEGSLTIDTDLLKASGIRPYERIYVYNVNNGERFETYAIEGEAGSGAIQLNGAAARKGMIGDFLIIVTYALCSDDEVDEHRPNVVLLNPDNTIKEIVK.

Ser25 (schiff-base intermediate with substrate; via pyruvic acid) is an active-site residue. Ser25 carries the pyruvic acid (Ser) modification. Residue Thr57 coordinates substrate. Tyr58 functions as the Proton donor in the catalytic mechanism. A substrate-binding site is contributed by 73–75; sequence GAA.

It belongs to the PanD family. As to quaternary structure, heterooctamer of four alpha and four beta subunits. Requires pyruvate as cofactor. Post-translationally, is synthesized initially as an inactive proenzyme, which is activated by self-cleavage at a specific serine bond to produce a beta-subunit with a hydroxyl group at its C-terminus and an alpha-subunit with a pyruvoyl group at its N-terminus.

The protein localises to the cytoplasm. It carries out the reaction L-aspartate + H(+) = beta-alanine + CO2. The protein operates within cofactor biosynthesis; (R)-pantothenate biosynthesis; beta-alanine from L-aspartate: step 1/1. In terms of biological role, catalyzes the pyruvoyl-dependent decarboxylation of aspartate to produce beta-alanine. The chain is Aspartate 1-decarboxylase from Desulfotalea psychrophila (strain LSv54 / DSM 12343).